A 235-amino-acid polypeptide reads, in one-letter code: Small ribosomal subunit protein uS3 (235 aa).

The region spanning 39 to 107 (IRTYIENELK…ETHLNIVEVR (69 aa)) is the KH type-2 domain. The tract at residues 215–235 (SERRAVEGAGDGGGQRRRENA) is disordered.

Belongs to the universal ribosomal protein uS3 family. Part of the 30S ribosomal subunit. Forms a tight complex with proteins S10 and S14.

Functionally, binds the lower part of the 30S subunit head. Binds mRNA in the 70S ribosome, positioning it for translation. This chain is Small ribosomal subunit protein uS3, found in Chelativorans sp. (strain BNC1).